The sequence spans 205 residues: Adenylyl-sulfate kinase (205 aa).

Position 31–38 (31–38) interacts with ATP; sequence GLSGAGKS. Serine 105 acts as the Phosphoserine intermediate in catalysis.

It belongs to the APS kinase family.

It carries out the reaction adenosine 5'-phosphosulfate + ATP = 3'-phosphoadenylyl sulfate + ADP + H(+). The protein operates within sulfur metabolism; hydrogen sulfide biosynthesis; sulfite from sulfate: step 2/3. Its function is as follows. Catalyzes the synthesis of activated sulfate. The sequence is that of Adenylyl-sulfate kinase from Shewanella baltica (strain OS195).